Here is a 195-residue protein sequence, read N- to C-terminus: dITP/XTP pyrophosphatase (195 aa).

9–14 (TNNQGK) provides a ligand contact to substrate. Residues glutamate 39 and aspartate 68 each coordinate Mg(2+). Aspartate 68 serves as the catalytic Proton acceptor. Residues serine 69, 146-149 (FGYD), lysine 169, and 174-175 (HR) contribute to the substrate site.

It belongs to the HAM1 NTPase family. As to quaternary structure, homodimer. The cofactor is Mg(2+).

The enzyme catalyses XTP + H2O = XMP + diphosphate + H(+). It catalyses the reaction dITP + H2O = dIMP + diphosphate + H(+). It carries out the reaction ITP + H2O = IMP + diphosphate + H(+). Its function is as follows. Pyrophosphatase that catalyzes the hydrolysis of nucleoside triphosphates to their monophosphate derivatives, with a high preference for the non-canonical purine nucleotides XTP (xanthosine triphosphate), dITP (deoxyinosine triphosphate) and ITP. Seems to function as a house-cleaning enzyme that removes non-canonical purine nucleotides from the nucleotide pool, thus preventing their incorporation into DNA/RNA and avoiding chromosomal lesions. The sequence is that of dITP/XTP pyrophosphatase from Gloeobacter violaceus (strain ATCC 29082 / PCC 7421).